The sequence spans 641 residues: Epsin-2 (641 aa).

Arginine 8, lysine 11, arginine 25, asparagine 30, arginine 63, and histidine 73 together coordinate a 1,2-diacyl-sn-glycero-3-phospho-(1D-myo-inositol-4,5-bisphosphate). An ENTH domain is found at asparagine 12–arginine 144. Phosphoserine is present on residues arginine 153 and glutamine 156. A compositionally biased stretch (polar residues) spans serine 163–histidine 181. Disordered regions lie at residues serine 163 to leucine 214 and arginine 255 to glutamate 275. Position 170 is an omega-N-methylarginine (arginine 170). A phosphoserine mark is found at serine 173, serine 192, and serine 195. The segment covering proline 259 to serine 273 has biased composition (polar residues). UIM domains follow at residues glutamate 275–glutamate 294 and glycine 300–isoleucine 319. Positions alanine 340–alanine 425 are disordered. Repeat copies occupy residues glutamate 352 to tryptophan 354, asparagine 364 to tryptophan 366, aspartate 377 to tryptophan 379, aspartate 391 to tryptophan 393, aspartate 409 to tryptophan 411, and aspartate 427 to tryptophan 429. The tract at residues glutamate 352–phenylalanine 639 is 6 X 3 AA repeats of [DE]-P-W. Residues serine 408–alanine 421 show a composition bias toward low complexity. The tract at residues threonine 470–phenylalanine 512 is disordered. Residues glutamate 472–arginine 506 are compositionally biased toward polar residues. Position 486 is a phosphoserine (serine 486). At threonine 508 the chain carries Phosphothreonine. A run of 2 repeats spans residues asparagine 537 to phenylalanine 539 and asparagine 552 to phenylalanine 554. The interval asparagine 537 to phenylalanine 639 is 3 X 3 AA repeats of N-P-F. A Phosphoserine modification is found at serine 570. The stretch at asparagine 637–phenylalanine 639 is repeat 3.

Belongs to the epsin family. As to quaternary structure, binds EPS15. Interacts with ITSN1. Binds AP-2 and clathrin. Interacts with UBQLN2. Post-translationally, ubiquitinated. As to expression, highest expression is found in brain. Detected at lower levels in lung and liver.

Its subcellular location is the cytoplasm. It localises to the cytoplasmic vesicle. The protein resides in the clathrin-coated vesicle. Its function is as follows. Plays a role in the formation of clathrin-coated invaginations and endocytosis. The chain is Epsin-2 (EPN2) from Homo sapiens (Human).